The following is a 263-amino-acid chain: MILLLDVGNTRIKWRVVQAAGTPAMAEGALGHAEVHGLQAIVAGFPALRRMVGSNVAGASLGAALDGMLTTAGIAGRWVQAARDEHGVRNGYDRPAQLGTDRWAALIGARRLHGGPCLVVSAGTATTVDHLDADGQFQGGLILPGIDLMRQSLASNTSGLRLEDGHVTPHPRNTADAIESGCAMAQAGAVERMFAQLVPQEDALCVLTGGAAPRFADLLSVRTHPVPNLVLDGLAVIAAADAADSCPPHPTGTRAWPGDGRIR.

6-13 (DVGNTRIK) provides a ligand contact to ATP. Residues Y92 and 99-102 (GTDR) each bind substrate. Residue D101 is the Proton acceptor of the active site. T124 is a binding site for ATP. Residue T174 participates in substrate binding.

It belongs to the type III pantothenate kinase family. Homodimer. NH4(+) is required as a cofactor. K(+) serves as cofactor.

The protein localises to the cytoplasm. The enzyme catalyses (R)-pantothenate + ATP = (R)-4'-phosphopantothenate + ADP + H(+). It functions in the pathway cofactor biosynthesis; coenzyme A biosynthesis; CoA from (R)-pantothenate: step 1/5. Its function is as follows. Catalyzes the phosphorylation of pantothenate (Pan), the first step in CoA biosynthesis. The sequence is that of Type III pantothenate kinase from Azoarcus sp. (strain BH72).